An 888-amino-acid chain; its full sequence is CRISPR-associated endonuclease/helicase Cas3 (888 aa).

In terms of domain architecture, HD Cas3-type spans Lys20–Leu231. Residues Asp75 and His160 each contribute to the Mg(2+) site. The Helicase ATP-binding domain maps to Asp301–Pro504. Ala314–Thr321 serves as a coordination point for ATP. Positions Asp452–His455 match the DEAH box motif. Residues Met556 to Tyr735 form the Helicase C-terminal domain.

The protein in the N-terminal section; belongs to the CRISPR-associated nuclease Cas3-HD family. This sequence in the central section; belongs to the CRISPR-associated helicase Cas3 family. Interacts with the CasA subunit of Cascade once Cascade has recognized target DNA. Mg(2+) is required as a cofactor.

CRISPR (clustered regularly interspaced short palindromic repeat), is an adaptive immune system that provides protection against mobile genetic elements (viruses, transposable elements and conjugative plasmids). CRISPR clusters contain sequences complementary to antecedent mobile elements and target invading nucleic acids. CRISPR clusters are transcribed and processed into CRISPR RNA (crRNA). Cas3 plus Cascade participate in CRISPR interference, the third stage of CRISPR immunity. Its function is as follows. Acts as an endonuclease, a 3'-5'exonuclease, and an ATP-dependent dsDNA helicase. Anneals and unwinds R-loops (in which crRNA binds the target DNA, displacing the noncomplementary strand). Unwinding requires ATP, annealing does not. Required along with the Cascade complex for resistance to bacteriophage lambda infection as well as the ability to cure CRISPR-encoding high-copy number plasmid. A Cas3-CasA fusion protein purified with the Cascade complex nicks target plasmid in the presence but not absence of Mg(2+), and degrades plasmid fully in the presence of Mg(2+) and ATP, suggesting the helicase activity is required for complete degradation. This chain is CRISPR-associated endonuclease/helicase Cas3 (ygcB), found in Escherichia coli (strain K12).